The sequence spans 181 residues: UPF0398 protein lin2003 (181 aa).

It belongs to the UPF0398 family.

The polypeptide is UPF0398 protein lin2003 (Listeria innocua serovar 6a (strain ATCC BAA-680 / CLIP 11262)).